The following is a 413-amino-acid chain: MNIYAVGGAIRDELLGVPVQDRDYVVVGATPEQMTAQGFRPVGKDFPVFLHPQTQEEYALARTERKTAAGYHGFQFHYAPDVTLDEDLARRDLTINAMAREVSPEGALVGPVIDPFDGQADLRARVFRHVSDAFVEDPVRILRIARFAARFADFTVADETLALMRRMVDAGEIDALVPERVWQEIARGLMEAKPSRMFAVLRDCGALARIVPEVDALWGVPQRADYHPEVDTGVHVMMVVDYAAKQGYSLAVRFAALTHDLGKGTTPADVLPRHVGHESRSVELLKPLCERLRVPNESRDLALVVAREHGNLHRVMEMGAAALVRLFERSDALRKPARFAELLQACESDARGRLGLDAQPYPQAERLRVALAAARSVDAGAIARGIGNDTEKIKEAVHRARVQAVAQALAIGE.

2 residues coordinate ATP: Gly-8 and Arg-11. The CTP site is built by Gly-8 and Arg-11. Mg(2+) contacts are provided by Asp-21 and Asp-23. The ATP site is built by Arg-91, Arg-143, and Arg-146. Residues Arg-91, Arg-143, and Arg-146 each contribute to the CTP site. One can recognise an HD domain in the interval 232–333 (TGVHVMMVVD…VRLFERSDAL (102 aa)).

The protein belongs to the tRNA nucleotidyltransferase/poly(A) polymerase family. Bacterial CCA-adding enzyme type 1 subfamily. Monomer. Can also form homodimers and oligomers. Mg(2+) is required as a cofactor. Ni(2+) serves as cofactor.

It catalyses the reaction a tRNA precursor + 2 CTP + ATP = a tRNA with a 3' CCA end + 3 diphosphate. The catalysed reaction is a tRNA with a 3' CCA end + 2 CTP + ATP = a tRNA with a 3' CCACCA end + 3 diphosphate. Catalyzes the addition and repair of the essential 3'-terminal CCA sequence in tRNAs without using a nucleic acid template. Adds these three nucleotides in the order of C, C, and A to the tRNA nucleotide-73, using CTP and ATP as substrates and producing inorganic pyrophosphate. tRNA 3'-terminal CCA addition is required both for tRNA processing and repair. Also involved in tRNA surveillance by mediating tandem CCA addition to generate a CCACCA at the 3' terminus of unstable tRNAs. While stable tRNAs receive only 3'-terminal CCA, unstable tRNAs are marked with CCACCA and rapidly degraded. This chain is Multifunctional CCA protein, found in Burkholderia orbicola (strain MC0-3).